Consider the following 126-residue polypeptide: Heavy metal-associated isoprenylated plant protein 14 (126 aa).

Residues 3–69 (AKNAVLQLSI…LCNTEIVSVD (67 aa)) form the HMA domain. Cys-123 bears the Cysteine methyl ester mark. A lipid anchor (S-farnesyl cysteine) is attached at Cys-123. The propeptide at 124–126 (VIM) is removed in mature form.

It belongs to the HIPP family.

In terms of biological role, probable heavy-metal-binding protein. In Arabidopsis thaliana (Mouse-ear cress), this protein is Heavy metal-associated isoprenylated plant protein 14.